The primary structure comprises 243 residues: Adenosylcobinamide-GDP ribazoletransferase (243 aa).

Helical transmembrane passes span Trp8 to Leu28, Pro36 to Leu56, Val58 to Leu78, Ala107 to Ser127, Lys131 to Ala151, Phe187 to Pro207, and Tyr222 to Ala242.

Belongs to the CobS family. The cofactor is Mg(2+).

The protein resides in the cell inner membrane. It carries out the reaction alpha-ribazole + adenosylcob(III)inamide-GDP = adenosylcob(III)alamin + GMP + H(+). The catalysed reaction is alpha-ribazole 5'-phosphate + adenosylcob(III)inamide-GDP = adenosylcob(III)alamin 5'-phosphate + GMP + H(+). The protein operates within cofactor biosynthesis; adenosylcobalamin biosynthesis; adenosylcobalamin from cob(II)yrinate a,c-diamide: step 7/7. In terms of biological role, joins adenosylcobinamide-GDP and alpha-ribazole to generate adenosylcobalamin (Ado-cobalamin). Also synthesizes adenosylcobalamin 5'-phosphate from adenosylcobinamide-GDP and alpha-ribazole 5'-phosphate. The sequence is that of Adenosylcobinamide-GDP ribazoletransferase from Thermosynechococcus vestitus (strain NIES-2133 / IAM M-273 / BP-1).